A 283-amino-acid polypeptide reads, in one-letter code: Thymidylate synthase (283 aa).

Residue Arg22 participates in dUMP binding. Cys160 functions as the Nucleophile in the catalytic mechanism. Residues 180-183 (RSAD), Asn191, and 221-223 (HIY) each bind dUMP. Asp183 serves as a coordination point for (6R)-5,10-methylene-5,6,7,8-tetrahydrofolate. A (6R)-5,10-methylene-5,6,7,8-tetrahydrofolate-binding site is contributed by Ser282.

It belongs to the thymidylate synthase family. Bacterial-type ThyA subfamily. Homodimer.

It localises to the cytoplasm. The enzyme catalyses dUMP + (6R)-5,10-methylene-5,6,7,8-tetrahydrofolate = 7,8-dihydrofolate + dTMP. Its pathway is pyrimidine metabolism; dTTP biosynthesis. In terms of biological role, catalyzes the reductive methylation of 2'-deoxyuridine-5'-monophosphate (dUMP) to 2'-deoxythymidine-5'-monophosphate (dTMP) while utilizing 5,10-methylenetetrahydrofolate (mTHF) as the methyl donor and reductant in the reaction, yielding dihydrofolate (DHF) as a by-product. This enzymatic reaction provides an intracellular de novo source of dTMP, an essential precursor for DNA biosynthesis. This Glaesserella parasuis serovar 5 (strain SH0165) (Haemophilus parasuis) protein is Thymidylate synthase.